The primary structure comprises 118 residues: Co-chaperonin GroES (118 aa).

Belongs to the GroES chaperonin family. As to quaternary structure, heptamer of 7 subunits arranged in a ring. Interacts with the chaperonin GroEL.

The protein resides in the cytoplasm. Its function is as follows. Together with the chaperonin GroEL, plays an essential role in assisting protein folding. The GroEL-GroES system forms a nano-cage that allows encapsulation of the non-native substrate proteins and provides a physical environment optimized to promote and accelerate protein folding. GroES binds to the apical surface of the GroEL ring, thereby capping the opening of the GroEL channel. This chain is Co-chaperonin GroES, found in Helicobacter pylori (strain P12).